Consider the following 169-residue polypeptide: 3-hydroxyacyl-[acyl-carrier-protein] dehydratase FabZ (169 aa).

H74 is a catalytic residue.

It belongs to the thioester dehydratase family. FabZ subfamily.

It localises to the cytoplasm. The enzyme catalyses a (3R)-hydroxyacyl-[ACP] = a (2E)-enoyl-[ACP] + H2O. In terms of biological role, involved in unsaturated fatty acids biosynthesis. Catalyzes the dehydration of short chain beta-hydroxyacyl-ACPs and long chain saturated and unsaturated beta-hydroxyacyl-ACPs. The protein is 3-hydroxyacyl-[acyl-carrier-protein] dehydratase FabZ of Gluconobacter oxydans (strain 621H) (Gluconobacter suboxydans).